A 590-amino-acid chain; its full sequence is Protein phosphatase PP2A regulatory subunit A (590 aa).

11 HEAT repeats span residues 12-50 (PIAV…TRDE), 89-127 (LLSP…LEQY), 206-244 (FIPL…EIRH), 246-284 (LLQP…IKDE), 285-323 (LIKP…VLEE), 324-362 (IIPV…TTEY), 363-401 (LLPM…LSQS), 402-440 (LLPA…FNEK), 480-518 (IIPK…IEKQ), 519-551 (ILPT…VLAA), and 562-590 (IIPL…QTND).

Belongs to the phosphatase 2A regulatory subunit A family. As to quaternary structure, PP2A exists in several trimeric forms, all of which consist of a core composed of a catalytic subunit associated with a 65 kDa (PR65) (Subunit A) and a 55 kDa (PR55) (Subunit B) regulatory subunit.

Phosphatase 2A affects a variety of biological processes in the cell such as transcription, cell cycle progression and cellular morphogenesis, and provides an initial identification of critical substrates for this phosphatase. The regulatory subunit may direct the catalytic subunit to distinct, albeit overlapping, subsets of substrates. The chain is Protein phosphatase PP2A regulatory subunit A (paa1) from Schizosaccharomyces pombe (strain 972 / ATCC 24843) (Fission yeast).